A 664-amino-acid chain; its full sequence is Intraflagellar transport protein 70B (664 aa).

TPR repeat units follow at residues 11–44, 45–78, 153–186, 188–220, 385–418, 423–456, and 458–491; these read DGEF…SSRS, RAGL…HPEL, YDGQ…SGYQ, DLSY…GIRQ, LTEQ…YDET, IPVL…CNDH, and VWKL…NYDN. Positions 507–534 form a coiled coil; it reads YIMTSQNEEAEELMRKIEKEEEQLSYGD. A TPR 8 repeat occupies 543–576; it reads CIVNLVIGTLYCAKGNYDFGISRVIKSLEPYHKK.

The protein belongs to the TTC30/dfy-1/fleer family. In terms of assembly, interacts with the IFT B complex components IFT27, IFT46, IFT74, IFT52, IFT57, IFT80, IFT81 and IFT88. Interacts with KIF17.

The protein localises to the cell projection. The protein resides in the cilium. Its function is as follows. Required for polyglutamylation of axonemal tubulin. Plays a role in anterograde intraflagellar transport (IFT), the process by which cilia precursors are transported from the base of the cilium to the site of their incorporation at the tip. The polypeptide is Intraflagellar transport protein 70B (Ift70b) (Mus musculus (Mouse)).